A 92-amino-acid polypeptide reads, in one-letter code: Small ribosomal subunit protein uS19 (92 aa).

Belongs to the universal ribosomal protein uS19 family.

In terms of biological role, protein S19 forms a complex with S13 that binds strongly to the 16S ribosomal RNA. This Rhizobium rhizogenes (strain K84 / ATCC BAA-868) (Agrobacterium radiobacter) protein is Small ribosomal subunit protein uS19.